A 194-amino-acid polypeptide reads, in one-letter code: AP-3 complex subunit sigma (194 aa).

The protein belongs to the adaptor complexes small subunit family. As to quaternary structure, adaptor protein complex 3 (AP-3) is a heterotetramer composed of 2 large adaptins (APL5 and APL6), a medium adaptin (APM3) and a small adaptin (APS3).

It localises to the golgi apparatus. The protein resides in the cytoplasmic vesicle membrane. Part of the AP-3 complex, an adaptor-related complex which is not clathrin-associated. The complex is associated with the Golgi region as well as more peripheral structures. It facilitates the budding of vesicles from the Golgi membrane and may be directly involved in trafficking to the vacuole. Required for the transport via the ALP pathway, which directs the transport of the cargo proteins PHO8 and VAM3 to the vacuole. This Saccharomyces cerevisiae (strain ATCC 204508 / S288c) (Baker's yeast) protein is AP-3 complex subunit sigma (APS3).